Reading from the N-terminus, the 234-residue chain is 2-C-methyl-D-erythritol 4-phosphate cytidylyltransferase (234 aa).

It belongs to the IspD/TarI cytidylyltransferase family. IspD subfamily.

The enzyme catalyses 2-C-methyl-D-erythritol 4-phosphate + CTP + H(+) = 4-CDP-2-C-methyl-D-erythritol + diphosphate. The protein operates within isoprenoid biosynthesis; isopentenyl diphosphate biosynthesis via DXP pathway; isopentenyl diphosphate from 1-deoxy-D-xylulose 5-phosphate: step 2/6. Catalyzes the formation of 4-diphosphocytidyl-2-C-methyl-D-erythritol from CTP and 2-C-methyl-D-erythritol 4-phosphate (MEP). This is 2-C-methyl-D-erythritol 4-phosphate cytidylyltransferase from Syntrophus aciditrophicus (strain SB).